A 180-amino-acid chain; its full sequence is tRNA (cytidine(56)-2'-O)-methyltransferase (180 aa).

S-adenosyl-L-methionine is bound by residues L84 and 112–116; that span reads GAEKV.

Belongs to the aTrm56 family. As to quaternary structure, homodimer.

It is found in the cytoplasm. The catalysed reaction is cytidine(56) in tRNA + S-adenosyl-L-methionine = 2'-O-methylcytidine(56) in tRNA + S-adenosyl-L-homocysteine + H(+). Specifically catalyzes the AdoMet-dependent 2'-O-ribose methylation of cytidine at position 56 in tRNAs. The chain is tRNA (cytidine(56)-2'-O)-methyltransferase from Haloarcula marismortui (strain ATCC 43049 / DSM 3752 / JCM 8966 / VKM B-1809) (Halobacterium marismortui).